A 696-amino-acid chain; its full sequence is Chitin synthase regulator SKT5 (696 aa).

2 disordered regions span residues 37 to 67 (GQDF…SANQ) and 90 to 145 (QEED…IKKR). Basic and acidic residues predominate over residues 41–53 (SDNKENRENRDNE). Low complexity predominate over residues 104–126 (LNNSNNTSLSSLGSTPTNSPSPG). The span at 129-139 (RQTNSSTSLTK) shows a compositional bias: polar residues. A Phosphoserine modification is found at Ser148. Sel1-like repeat units follow at residues 271–306 (SDAQ…KHGH), 307–342 (IESA…SRNH), 343–382 (PSAM…ARAN), 386–423 (AAAP…SLGH), 424–460 (VPSA…LKGD), 461–498 (SVAM…NAGL), and 499–534 (PKAQ…GNED). Residues Ser561 and Ser563 each carry the phosphoserine modification. Thr564 carries the phosphothreonine modification. 3 stretches are compositionally biased toward polar residues: residues 576–593 (SNVG…TFFT), 605–634 (LQIN…SSAK), and 651–661 (VSLSNMGSSNM). A disordered region spans residues 576–696 (SNVGSNSRVS…GKKKKDCVIM (121 aa)). Basic and acidic residues predominate over residues 662-675 (IRKDFPAVKTESKK). A compositionally biased stretch (basic residues) spans 680-696 (KNKKDKQGKKKKDCVIM). At Cys693 the chain carries Cysteine methyl ester. A lipid anchor (S-farnesyl cysteine) is attached at Cys693. Residues 694–696 (VIM) constitute a propeptide, removed in mature form.

Belongs to the SKT5 family. May interact with CHS3 and seems to be an adapter (along with BNI4) to link CHS3 to septins. In terms of processing, farnesylation is required for chitin synthase CHS3 activity but is not required for SKT5 membrane association.

It localises to the cell membrane. In terms of biological role, activator of the chitin synthase CHS3 which polymerizes chitin, a structural polymer of the fungal cell wall. The polypeptide is Chitin synthase regulator SKT5 (Saccharomyces cerevisiae (strain ATCC 204508 / S288c) (Baker's yeast)).